A 464-amino-acid chain; its full sequence is Leucine-rich repeat-containing protein 34 (464 aa).

Positions 1–48 are disordered; it reads MAAQPPRPVGERSMGSSREAARAPARSPAWASTQASTPGAALAVQRES. Residues 16-32 are compositionally biased toward low complexity; that stretch reads SSREAARAPARSPAWAS. LRR repeat units follow at residues 295 to 315 and 323 to 345; these read SLRY…VYLA and TLEV…LSET.

Interacts with NPM1 and NCL.

It localises to the nucleus. Its subcellular location is the nucleolus. The protein localises to the cytoplasm. Its function is as follows. Highly expressed in stem cells where it may be involved in regulation of pluripotency. In embryonic stem cells (ESCs), important for normal expression of the pluripotency regulators POU5F1/OCT4 and KLF4. Also important for expression of the ectodermal marker gene NES and the endodermal marker gene GATA4. Promotes stem cell proliferation in vitro. In Homo sapiens (Human), this protein is Leucine-rich repeat-containing protein 34 (LRRC34).